Consider the following 171-residue polypeptide: 3-hydroxydecanoyl-[acyl-carrier-protein] dehydratase (171 aa).

Residue H70 is part of the active site.

Belongs to the thioester dehydratase family. FabA subfamily. In terms of assembly, homodimer.

The protein localises to the cytoplasm. The enzyme catalyses a (3R)-hydroxyacyl-[ACP] = a (2E)-enoyl-[ACP] + H2O. It catalyses the reaction (3R)-hydroxydecanoyl-[ACP] = (2E)-decenoyl-[ACP] + H2O. It carries out the reaction (2E)-decenoyl-[ACP] = (3Z)-decenoyl-[ACP]. The protein operates within lipid metabolism; fatty acid biosynthesis. Its function is as follows. Necessary for the introduction of cis unsaturation into fatty acids. Catalyzes the dehydration of (3R)-3-hydroxydecanoyl-ACP to E-(2)-decenoyl-ACP and then its isomerization to Z-(3)-decenoyl-ACP. Can catalyze the dehydratase reaction for beta-hydroxyacyl-ACPs with saturated chain lengths up to 16:0, being most active on intermediate chain length. This Xanthomonas oryzae pv. oryzae (strain MAFF 311018) protein is 3-hydroxydecanoyl-[acyl-carrier-protein] dehydratase.